The chain runs to 474 residues: MTVKTRFAPSPTGYLHVGGARTALYSWLFAKNKGGEFVLRIEDTDLERNSQEAVDAILEGMKWMGMEWDEGPYYQSKRFDRYNEVVDLLLSEDKAYKCYASKELLDEIRTEQEENKEMARYDANHPKIVAANAAAKEGDASVIRFRNPKEGSVVFDDQIRGRIEISNSQLDDLIIRRTDGAPTYNFVVVVDDWDMGITQVIRGEDHINNTPRQINIYEALGAPVPMFAHCAMILGDDGAKLSKRHGAVSVMQYRDEGYLPNALNNYLVRLGWSHGDQEIFSQEEMINLFSLDAVSKSASAFNTDKLRWLNNHYIKTSEPEYVANYLQWHLDQKEISLDNGPAITDVITLVSERCNTLIELADQSRYFYEDFEAFDAGAAKKHLRGVAKGPLELALAKIEALQEWTTENLHNVIEEVCAELEIGMGKIGMPLRVAVTGGGQSPSVDAVMQLIGKERVVTRIKMALAFIAEREANA.

Positions 9–19 (PSPTGYLHVGG) match the 'HIGH' region motif. A 'KMSKS' region motif is present at residues 240 to 244 (KLSKR). Residue Lys-243 coordinates ATP.

Belongs to the class-I aminoacyl-tRNA synthetase family. Glutamate--tRNA ligase type 1 subfamily. As to quaternary structure, monomer.

It localises to the cytoplasm. The enzyme catalyses tRNA(Glu) + L-glutamate + ATP = L-glutamyl-tRNA(Glu) + AMP + diphosphate. Its function is as follows. Catalyzes the attachment of glutamate to tRNA(Glu) in a two-step reaction: glutamate is first activated by ATP to form Glu-AMP and then transferred to the acceptor end of tRNA(Glu). This Aliivibrio salmonicida (strain LFI1238) (Vibrio salmonicida (strain LFI1238)) protein is Glutamate--tRNA ligase.